We begin with the raw amino-acid sequence, 75 residues long: Penaeidin-3n (75 aa).

A signal peptide spans 1 to 19; the sequence is MRLVVCLVFLASFALVCQG. The residue at position 20 (Gln-20) is a Pyrrolidone carboxylic acid. Intrachain disulfides connect Cys-44-Cys-59 and Cys-48-Cys-66. A Serine amide modification is found at Ser-74.

This sequence belongs to the penaeidin family.

The protein resides in the cytoplasmic granule. Functionally, antibacterial and antifungal activity. Presents chitin-binding activity. The protein is Penaeidin-3n of Penaeus setiferus (Atlantic white shrimp).